We begin with the raw amino-acid sequence, 122 residues long: Small ribosomal subunit protein uS13 (122 aa).

Residues 93-122 form a disordered region; the sequence is RRGLPVRGQRTKTNARTRKGPKKTIAGKKK.

Belongs to the universal ribosomal protein uS13 family. In terms of assembly, part of the 30S ribosomal subunit. Forms a loose heterodimer with protein S19. Forms two bridges to the 50S subunit in the 70S ribosome.

Functionally, located at the top of the head of the 30S subunit, it contacts several helices of the 16S rRNA. In the 70S ribosome it contacts the 23S rRNA (bridge B1a) and protein L5 of the 50S subunit (bridge B1b), connecting the 2 subunits; these bridges are implicated in subunit movement. Contacts the tRNAs in the A and P-sites. In Corynebacterium kroppenstedtii (strain DSM 44385 / JCM 11950 / CIP 105744 / CCUG 35717), this protein is Small ribosomal subunit protein uS13.